Reading from the N-terminus, the 446-residue chain is Histidine--tRNA ligase (446 aa).

This sequence belongs to the class-II aminoacyl-tRNA synthetase family. As to quaternary structure, homodimer.

The protein localises to the cytoplasm. The catalysed reaction is tRNA(His) + L-histidine + ATP = L-histidyl-tRNA(His) + AMP + diphosphate + H(+). This is Histidine--tRNA ligase from Burkholderia vietnamiensis (strain G4 / LMG 22486) (Burkholderia cepacia (strain R1808)).